A 645-amino-acid polypeptide reads, in one-letter code: 1-deoxy-D-xylulose-5-phosphate synthase 1 (645 aa).

Residues 1–20 are disordered; it reads MTDTKTPTLDRVAGPADLRS. Thiamine diphosphate-binding positions include His78 and 119–121; that span reads AHS. Residue Asp150 coordinates Mg(2+). Thiamine diphosphate contacts are provided by residues 151–152, Asn179, Tyr291, and Glu373; that span reads GS. Asn179 contacts Mg(2+).

It belongs to the transketolase family. DXPS subfamily. Homodimer. It depends on Mg(2+) as a cofactor. Thiamine diphosphate serves as cofactor.

The enzyme catalyses D-glyceraldehyde 3-phosphate + pyruvate + H(+) = 1-deoxy-D-xylulose 5-phosphate + CO2. Its pathway is metabolic intermediate biosynthesis; 1-deoxy-D-xylulose 5-phosphate biosynthesis; 1-deoxy-D-xylulose 5-phosphate from D-glyceraldehyde 3-phosphate and pyruvate: step 1/1. Its function is as follows. Catalyzes the acyloin condensation reaction between C atoms 2 and 3 of pyruvate and glyceraldehyde 3-phosphate to yield 1-deoxy-D-xylulose-5-phosphate (DXP). This chain is 1-deoxy-D-xylulose-5-phosphate synthase 1, found in Roseobacter denitrificans (strain ATCC 33942 / OCh 114) (Erythrobacter sp. (strain OCh 114)).